Here is a 684-residue protein sequence, read N- to C-terminus: MTLQTTPSTPLVQDPPVPATLVHAAAQHPLEQLSAEEIHEARRILAEAGLVGESTRFAYLGLIEPPKTTRQGDVTGAARLVRAMLWDAAQSRSLDVRLSLATGLVVDRRELNPEADGQLPVLLEEFGIIEDILSEDPQWNAALTARGLTPAQVRVAPLSAGVFEYGNEEGKRLLRGLGFRQDHPADHPWAHPIDGLVAFVDVENRRVNHLIDDGPVPVPEVNGNYTDPAIRGELRTDLLPIEIMQPEGPSFTLEGNHLSWAGWDLRVGFDAREGLVLHQLHHSHKGRRRPVIHRASISEMVVPYGDPSPYRSWQNYFDSGEYLVGRDANSLRLGCDCLGDITYMSPVVADDFGNPRTIENGICIHEEDAGILWKHTDEWAGSDEVRRNRRLVVSFFTTVGNYDYGFYWYLYLDGTIEFEAKATGIVFTAALPDKDYAYASEIAPGLGAPYHQHLFSARLDMMIDGDANRVEELDLVRLPKGPGNPHGNAFTQKRTLLARESEAVRDADGAKGRVWHISNPDSLNHLGHPVGYTLYPEGNPTLAMADDSSIASRAAFARHHLWVTRHAEEELYAAGDFVNQHPGGAVLPAYVAQDRDIDGQDLVVWHSFGLTHFPRPEDWPIMPVDTTGFTLKPHGFFDENPTLNVPSSAAGHCGTGSEREHAAPGGTAVGHSGPDTGGQGHCGH.

Substrate is bound at residue 316 to 327 (YFDSGEYLVGRD). The active-site Proton acceptor is Asp318. A disulfide bridge connects residues Cys337 and Cys363. 399–404 (VGNYDY) contributes to the substrate binding site. The active-site Schiff-base intermediate with substrate; via topaquinone is the Tyr402. Tyr402 bears the 2',4',5'-topaquinone mark. Residues His451 and His453 each contribute to the Cu cation site. Residues Asp460, Glu500, Tyr590, and Asp601 each contribute to the Ca(2+) site. Asp460 contributes to the Mn(2+) binding site. Asp601 is a binding site for Mn(2+). His612 lines the Cu cation pocket. The segment at 647-684 (SSAAGHCGTGSEREHAAPGGTAVGHSGPDTGGQGHCGH) is disordered. The segment covering 675–684 (DTGGQGHCGH) has biased composition (gly residues).

This sequence belongs to the copper/topaquinone oxidase family. As to quaternary structure, homodimer. Requires Cu cation as cofactor. Zn(2+) is required as a cofactor. It depends on Ca(2+) as a cofactor. The cofactor is L-topaquinone. Mn(2+) serves as cofactor. Post-translationally, topaquinone (TPQ) is generated by copper-dependent autoxidation of a specific tyrosyl residue.

Its subcellular location is the cytoplasm. The catalysed reaction is a primary methyl amine + O2 + H2O = an aldehyde + H2O2 + NH4(+). The enzyme catalyses histamine + O2 + H2O = imidazole-4-acetaldehyde + H2O2 + NH4(+). In terms of biological role, oxidizes histamine. Other amines including phenethylamine, tyramine, tryptamine, putrescine, and benzylamine also serve as substrate. In Arthrobacter globiformis, this protein is Histamine oxidase.